The sequence spans 213 residues: Pyridoxine/pyridoxamine 5'-phosphate oxidase (213 aa).

Residues 8-11 (RKNY) and K66 each bind substrate. FMN contacts are provided by residues 61–66 (RIVLIK), 76–77 (FT), R82, K83, and Q105. Substrate is bound by residues Y123, R127, and S131. Residues 140–141 (QS) and W184 each bind FMN. Residue 190–192 (RLH) participates in substrate binding. Residue R194 coordinates FMN.

Belongs to the pyridoxamine 5'-phosphate oxidase family. Homodimer. It depends on FMN as a cofactor.

It carries out the reaction pyridoxamine 5'-phosphate + O2 + H2O = pyridoxal 5'-phosphate + H2O2 + NH4(+). The catalysed reaction is pyridoxine 5'-phosphate + O2 = pyridoxal 5'-phosphate + H2O2. The protein operates within cofactor metabolism; pyridoxal 5'-phosphate salvage; pyridoxal 5'-phosphate from pyridoxamine 5'-phosphate: step 1/1. It participates in cofactor metabolism; pyridoxal 5'-phosphate salvage; pyridoxal 5'-phosphate from pyridoxine 5'-phosphate: step 1/1. In terms of biological role, catalyzes the oxidation of either pyridoxine 5'-phosphate (PNP) or pyridoxamine 5'-phosphate (PMP) into pyridoxal 5'-phosphate (PLP). The sequence is that of Pyridoxine/pyridoxamine 5'-phosphate oxidase from Paraburkholderia xenovorans (strain LB400).